Reading from the N-terminus, the 511-residue chain is Cytochrome P450 4B1 (511 aa).

Glu315 contacts heme. Ser436 carries the phosphoserine modification. Residue Cys453 coordinates heme.

The protein belongs to the cytochrome P450 family. It depends on heme as a cofactor. Detected in the liver and lung (at protein level).

The protein resides in the endoplasmic reticulum membrane. It localises to the microsome membrane. The catalysed reaction is an organic molecule + reduced [NADPH--hemoprotein reductase] + O2 = an alcohol + oxidized [NADPH--hemoprotein reductase] + H2O + H(+). Functionally, cytochromes P450 are a group of heme-thiolate monooxygenases. In liver microsomes, this enzyme is involved in an NADPH-dependent electron transport pathway. It oxidizes a variety of structurally unrelated compounds, including steroids, fatty acids, and xenobiotics. This is Cytochrome P450 4B1 (CYP4B1) from Homo sapiens (Human).